Reading from the N-terminus, the 392-residue chain is CD2 homolog (392 aa).

Residues 1 to 16 (MIIKLIFLICFKIVLS) form the signal peptide. The Extracellular portion of the chain corresponds to 17 to 222 (IDNKTKFNET…YLDFFQVTSY (206 aa)). N39, N88, N92, N106, N148, N159, N183, N191, N198, and N204 each carry an N-linked (GlcNAc...) asparagine; by host glycan. 2 disulfide bridges follow: C137–C205 and C144–C188. The chain crosses the membrane as a helical span at residues 223-243 (IFYMIIFIVTGITVSILISII). Residues 244 to 392 (TFLFIRKRKH…ISLIHVDRII (149 aa)) lie on the Cytoplasmic side of the membrane. The interval 258-290 (ESPPPESNEEEQQCHHDTTSIHEPSPREPLLPK) is disordered. Over residues 269–283 (QQCHHDTTSIHEPSP) the composition is skewed to basic and acidic residues. 5 tandem repeats follow at residues 319–324 (KPCPPP), 325–330 (KPCPPP), 331–336 (KPCPPP), 337–342 (KPCPPS), and 343–348 (KPCPPP). Residues 319–348 (KPCPPPKPCPPPKPCPPPKPCPPSKPCPPP) form a 5 X 6 AA tandem repeats of K-P-C-[PRS]-[P]-[PS] region. The tract at residues 328–357 (PPPKPCPPPKPCPPSKPCPPPEPYSPPKPC) is disordered.

This sequence belongs to the asfivirus CD2 homolog protein family. In terms of assembly, both glycosylated and nonglycosylated forms interact (via C-terminus) with the host AP-1 complex. Cleaved into two fragments of 63 kDa and 26 kDa containing respectively the glycosylated N-terminus and the nonglycosylated C-terminus. A full-length 89-kDa glycosylated form also exists.

It localises to the host cell membrane. Its subcellular location is the virion membrane. The protein resides in the host Golgi apparatus. Its function is as follows. May play an immunosuppressive role by inhibiting lymphocyte proliferation and subsequently facilitating viral replication and generalization of infection. Responsible for viral hemadsorption, which may help viral spread. Increases virus replication in the tick vector at the step of virus uptake or replication in the tick gut. May play a role in the host Golgi reorganization to yield viral factories. May play a role in host cell penetration. The chain is CD2 homolog from Ornithodoros (relapsing fever ticks).